An 863-amino-acid chain; its full sequence is Adenosylcobalamin biosynthesis bifunctional protein CobDQ (863 aa).

Residues 1-373 form a putative threonine-phosphate decarboxylase region; that stretch reads MNLPEHGGNL…LKSRKKTPSI (373 aa). O-phospho-L-threonine-binding positions include 6 to 7, asparagine 30, and asparagine 159; that span reads HG. Lysine 214 carries the N6-(pyridoxal phosphate)lysine modification. Arginine 323 and arginine 337 together coordinate O-phospho-L-threonine. A cobyric acid synthase region spans residues 374 to 863; that stretch reads MFQGTASNVG…NLIYRKLGLG (490 aa). The region spanning 622 to 810 is the GATase cobBQ-type domain; the sequence is RLDVVLIDIP…IHGIFDKDEF (189 aa). Catalysis depends on cysteine 704, which acts as the Nucleophile. Histidine 802 is an active-site residue.

In the N-terminal section; belongs to the class-II pyridoxal-phosphate-dependent aminotransferase family. This sequence in the C-terminal section; belongs to the CobB/CobQ family. CobQ subfamily. Requires pyridoxal 5'-phosphate as cofactor.

It carries out the reaction O-phospho-L-threonine + H(+) = (R)-1-aminopropan-2-yl phosphate + CO2. The protein operates within cofactor biosynthesis; adenosylcobalamin biosynthesis. Catalyzes two activities which are involved in the adenosylcobalamin biosynthesis: decarboxylates L-threonine-O-3-phosphate to yield (R)-1-amino-2-propanol O-2-phosphate, the precursor for the linkage between the nucleotide loop and the corrin ring in cobalamin, and catalyzes amidations at positions B, D, E, and G on adenosylcobyrinic A,C-diamide. NH(2) groups are provided by glutamine, and one molecule of ATP is hydrogenolyzed for each amidation. In Leptospira interrogans serogroup Icterohaemorrhagiae serovar Lai (strain 56601), this protein is Adenosylcobalamin biosynthesis bifunctional protein CobDQ (cobDQ).